A 201-amino-acid polypeptide reads, in one-letter code: dCTP deaminase, dUMP-forming (201 aa).

Residues 101-106 (KSSLGR), aspartate 119, 127-129 (TLE), glutamine 148, tyrosine 162, and glutamine 174 each bind dCTP. The active-site Proton donor/acceptor is glutamate 129.

This sequence belongs to the dCTP deaminase family. In terms of assembly, homotrimer.

The enzyme catalyses dCTP + 2 H2O = dUMP + NH4(+) + diphosphate. It functions in the pathway pyrimidine metabolism; dUMP biosynthesis; dUMP from dCTP: step 1/1. Functionally, bifunctional enzyme that catalyzes both the deamination of dCTP to dUTP and the hydrolysis of dUTP to dUMP without releasing the toxic dUTP intermediate. The protein is dCTP deaminase, dUMP-forming of Clavibacter michiganensis subsp. michiganensis (strain NCPPB 382).